A 211-amino-acid polypeptide reads, in one-letter code: Ceramide-1-phosphate transfer protein (211 aa).

An N-acylsphingoid base 1-phosphate-binding residues include aspartate 53, lysine 57, arginine 103, arginine 107, and histidine 147.

Belongs to the GLTP family.

Its subcellular location is the cytoplasm. It is found in the cytosol. The protein resides in the golgi apparatus. The protein localises to the trans-Golgi network membrane. It localises to the cell membrane. Its subcellular location is the endosome membrane. It is found in the nucleus outer membrane. The catalysed reaction is N-(hexadecanoyl)-sphing-4-enine-1-phosphate(in) = N-(hexadecanoyl)-sphing-4-enine-1-phosphate(out). It carries out the reaction N-(9Z-octadecenoyl)-sphing-4-enine-1-phosphate(in) = N-(9Z-octadecenoyl)-sphing-4-enine-1-phosphate(out). In terms of biological role, mediates the intracellular transfer of ceramide-1-phosphate (C1P) between organelle membranes and the cell membrane. Required for normal structure of the Golgi stacks. Can bind phosphoceramides with a variety of aliphatic chains, but has a preference for lipids with saturated C16:0 or monounsaturated C18:1 aliphatic chains, and is inefficient with phosphoceramides containing lignoceryl (C24:0). Plays a role in the regulation of the cellular levels of ceramide-1-phosphate, and thereby contributes to the regulation of phospholipase PLA2G4A activity and the release of arachidonic acid. Has no activity with galactosylceramide, lactosylceramide, sphingomyelin, phosphatidylcholine, phosphatidic acid and ceramide. C1P transfer is stimulated by phosphatidylserine in C1P source vesicles. Regulates autophagy and pyroptosis, but not apoptosis. This is Ceramide-1-phosphate transfer protein (cptp) from Danio rerio (Zebrafish).